The primary structure comprises 432 residues: Serine hydroxymethyltransferase (432 aa).

Residues Leu-131 and 135–137 each bind (6S)-5,6,7,8-tetrahydrofolate; that span reads GHL. Lys-240 bears the N6-(pyridoxal phosphate)lysine mark.

The protein belongs to the SHMT family. As to quaternary structure, homodimer. Pyridoxal 5'-phosphate serves as cofactor.

The protein resides in the cytoplasm. It carries out the reaction (6R)-5,10-methylene-5,6,7,8-tetrahydrofolate + glycine + H2O = (6S)-5,6,7,8-tetrahydrofolate + L-serine. The protein operates within one-carbon metabolism; tetrahydrofolate interconversion. Its pathway is amino-acid biosynthesis; glycine biosynthesis; glycine from L-serine: step 1/1. In terms of biological role, catalyzes the reversible interconversion of serine and glycine with tetrahydrofolate (THF) serving as the one-carbon carrier. This reaction serves as the major source of one-carbon groups required for the biosynthesis of purines, thymidylate, methionine, and other important biomolecules. Also exhibits THF-independent aldolase activity toward beta-hydroxyamino acids, producing glycine and aldehydes, via a retro-aldol mechanism. This chain is Serine hydroxymethyltransferase, found in Bradyrhizobium diazoefficiens (strain JCM 10833 / BCRC 13528 / IAM 13628 / NBRC 14792 / USDA 110).